The following is a 449-amino-acid chain: Sensor protein QseC (449 aa).

Topologically, residues 1–12 are cytoplasmic; that stretch reads MKFTQRLSLRVR. The helical transmembrane segment at 13 to 33 threads the bilayer; it reads LTLIFLILASVTWLLSSFVAW. Residues 34-156 are Periplasmic-facing; the sequence is KQTTDNVDEL…QEWEYREDMA (123 aa). A helical membrane pass occupies residues 157–177; sequence LAIVAGQLIPWLVALPIMLII. Over 178–449 the chain is Cytoplasmic; the sequence is MMVLLGRELA…QGGFEAKVSW (272 aa). Residues 243 to 449 form the Histidine kinase domain; it reads DAAHELRSPL…QGGFEAKVSW (207 aa). Histidine 246 is subject to Phosphohistidine; by autocatalysis.

The protein localises to the cell inner membrane. It catalyses the reaction ATP + protein L-histidine = ADP + protein N-phospho-L-histidine.. Functionally, member of a two-component regulatory system QseB/QseC. Activates the flagella regulon by activating transcription of FlhDC. May activate QseB by phosphorylation. The chain is Sensor protein QseC (qseC) from Escherichia coli (strain K12).